Here is a 250-residue protein sequence, read N- to C-terminus: MLEKQKGIIIKSVDYGESDKIITILNEHGAKIPLMVRRAKKSKTGLQAHTQLFVYGLFIYNKWKGMGTLSSVDVINQYYDLRLDIFNSSYATLCTEAIERSMDNDDISPFHYKLLHFVLEKISNGDSAQLMSIIVLLKCMNRFGFTAFFNHSAISNSYDQSKLVAYSFVYDGTILESELYKDPHAFRISNKTLYLLDVLQKLPIDKMNQFNISQEILDEMSELILLIYKEYAGMYFKGQKLINQLKRIEY.

This sequence belongs to the RecO family.

In terms of biological role, involved in DNA repair and RecF pathway recombination. This chain is DNA repair protein RecO, found in Staphylococcus haemolyticus (strain JCSC1435).